The following is a 163-amino-acid chain: Putative protein CASTOR3P (163 aa).

The protein belongs to the GATS family.

The polypeptide is Putative protein CASTOR3P (Homo sapiens (Human)).